We begin with the raw amino-acid sequence, 545 residues long: MAELTINADDVRIALNEFAASYEPGNAERVEVGRVTTAGDGIARVEGLPSVMANELLRFEDGTLGLAQNLDVREIGVIVLGDFTGIEEGQEVHRTGQVLSVPVGDAFLGRVVDPLGQPIDDLGEIKAETTRALELQAPGVTQRKSVHEPMQTGLKAIDAMIPIGRGQRQLIIGDRQTGKSAIAIDTIINQKANWASGDVTKQVRCIYVAIGQKASTIAAVRQTLEDNGALEYTTIVASPASDPAGFKYLAPYAGSAIGQHWMYGGKHVLIVFDDLSKQAEAYRAVSLLLRRPPGREAYPGDVFYLHSRLLERCAKLSDELGAGSMTGLPLIETKANDVSAYIPTNVISITDGQIFLQSDLFNANQRPAVDVGVSVSRVGGAAQVKSMKKVSGTLKLELAQYRDMQAFAMFASDLDAASRQQLTRGARLMELLKQGQYSPFPVENQVVSIWAGTNGYLDDVPVEDISRFETEFLEHLKHKSSILTTLAQTNVMDDDTAEALKTSIVAFKKGFFGEGDNLLVGAGHEEYAPIDEAQVDQEKIVKQKR.

173–180 (GDRQTGKS) contributes to the ATP binding site.

It belongs to the ATPase alpha/beta chains family. As to quaternary structure, F-type ATPases have 2 components, CF(1) - the catalytic core - and CF(0) - the membrane proton channel. CF(1) has five subunits: alpha(3), beta(3), gamma(1), delta(1), epsilon(1). CF(0) has three main subunits: a(1), b(2) and c(9-12). The alpha and beta chains form an alternating ring which encloses part of the gamma chain. CF(1) is attached to CF(0) by a central stalk formed by the gamma and epsilon chains, while a peripheral stalk is formed by the delta and b chains.

The protein resides in the cell membrane. It carries out the reaction ATP + H2O + 4 H(+)(in) = ADP + phosphate + 5 H(+)(out). Its function is as follows. Produces ATP from ADP in the presence of a proton gradient across the membrane. The alpha chain is a regulatory subunit. This Arthrobacter sp. (strain FB24) protein is ATP synthase subunit alpha.